Reading from the N-terminus, the 291-residue chain is Glutathione S-transferase 2 (291 aa).

Residues 2–83 (SPVKVFGHPM…YILRKYGGTA (82 aa)) form the GST N-terminal domain. Glutathione-binding positions include 41 to 42 (HK), 54 to 55 (KM), and 67 to 68 (KS). One can recognise a GST C-terminal domain in the interval 93 to 223 (GIEELAMVDV…RVCKHMPTEF (131 aa)).

This sequence belongs to the GST superfamily. Phi family.

The catalysed reaction is RX + glutathione = an S-substituted glutathione + a halide anion + H(+). Conjugation of reduced glutathione to a wide number of exogenous and endogenous hydrophobic electrophiles. This chain is Glutathione S-transferase 2 (GSTA2), found in Triticum aestivum (Wheat).